The primary structure comprises 268 residues: Putative esterase/lipase 1 (268 aa).

Histidine 27 is a catalytic residue. Serine 94 acts as the Charge relay system in catalysis.

The protein belongs to the lipase/esterase LIP3/BchO family.

The protein is Putative esterase/lipase 1 of Mycoplasma genitalium (strain ATCC 33530 / DSM 19775 / NCTC 10195 / G37) (Mycoplasmoides genitalium).